The chain runs to 319 residues: Lipoyl synthase (319 aa).

Positions 5–31 are disordered; the sequence is LDTISANPVRPRHPEKANRPDALSPPK. Positions 61, 66, 72, 87, 91, 94, and 300 each coordinate [4Fe-4S] cluster. The 217-residue stretch at 73–289 folds into the Radical SAM core domain; sequence WDKKHATFMI…ETVAYTKGFL (217 aa).

This sequence belongs to the radical SAM superfamily. Lipoyl synthase family. It depends on [4Fe-4S] cluster as a cofactor.

It localises to the cytoplasm. It catalyses the reaction [[Fe-S] cluster scaffold protein carrying a second [4Fe-4S](2+) cluster] + N(6)-octanoyl-L-lysyl-[protein] + 2 oxidized [2Fe-2S]-[ferredoxin] + 2 S-adenosyl-L-methionine + 4 H(+) = [[Fe-S] cluster scaffold protein] + N(6)-[(R)-dihydrolipoyl]-L-lysyl-[protein] + 4 Fe(3+) + 2 hydrogen sulfide + 2 5'-deoxyadenosine + 2 L-methionine + 2 reduced [2Fe-2S]-[ferredoxin]. The protein operates within protein modification; protein lipoylation via endogenous pathway; protein N(6)-(lipoyl)lysine from octanoyl-[acyl-carrier-protein]: step 2/2. Its function is as follows. Catalyzes the radical-mediated insertion of two sulfur atoms into the C-6 and C-8 positions of the octanoyl moiety bound to the lipoyl domains of lipoate-dependent enzymes, thereby converting the octanoylated domains into lipoylated derivatives. The polypeptide is Lipoyl synthase (Nitrobacter winogradskyi (strain ATCC 25391 / DSM 10237 / CIP 104748 / NCIMB 11846 / Nb-255)).